We begin with the raw amino-acid sequence, 124 residues long: Fluoride-specific ion channel FluC (124 aa).

Helical transmembrane passes span Met1–Asn21, Thr36–Phe56, Leu66–Ala86, and Ala94–Phe114. The Na(+) site is built by Gly74 and Thr77.

This sequence belongs to the fluoride channel Fluc/FEX (TC 1.A.43) family.

Its subcellular location is the cell inner membrane. It catalyses the reaction fluoride(in) = fluoride(out). Na(+) is not transported, but it plays an essential structural role and its presence is essential for fluoride channel function. In terms of biological role, fluoride-specific ion channel. Important for reducing fluoride concentration in the cell, thus reducing its toxicity. This Rhodopseudomonas palustris (strain ATCC BAA-98 / CGA009) protein is Fluoride-specific ion channel FluC.